The sequence spans 374 residues: Protein-glutamate methylesterase/protein-glutamine glutaminase 1 (374 aa).

The Response regulatory domain maps to 4–121 (KVLVVDDSSF…ATNKDEAILL (118 aa)). 4-aspartylphosphate is present on D55. Positions 141-170 (PSVAPVTPRPTTGSAVGNATTPVQSASAPV) are disordered. The span at 149 to 167 (RPTTGSAVGNATTPVQSAS) shows a compositional bias: polar residues. The region spanning 174–374 (PLSSIRASGK…ESILKESARG (201 aa)) is the CheB-type methylesterase domain. Catalysis depends on residues S193, H220, and D316.

This sequence belongs to the CheB family. In terms of processing, phosphorylated by CheA. Phosphorylation of the N-terminal regulatory domain activates the methylesterase activity.

The protein localises to the cytoplasm. The catalysed reaction is [protein]-L-glutamate 5-O-methyl ester + H2O = L-glutamyl-[protein] + methanol + H(+). It catalyses the reaction L-glutaminyl-[protein] + H2O = L-glutamyl-[protein] + NH4(+). Involved in chemotaxis. Part of a chemotaxis signal transduction system that modulates chemotaxis in response to various stimuli. Catalyzes the demethylation of specific methylglutamate residues introduced into the chemoreceptors (methyl-accepting chemotaxis proteins or MCP) by CheR. Also mediates the irreversible deamidation of specific glutamine residues to glutamic acid. The protein is Protein-glutamate methylesterase/protein-glutamine glutaminase 1 of Shewanella oneidensis (strain ATCC 700550 / JCM 31522 / CIP 106686 / LMG 19005 / NCIMB 14063 / MR-1).